The chain runs to 274 residues: 2,3,4,5-tetrahydropyridine-2,6-dicarboxylate N-succinyltransferase (274 aa).

Substrate is bound by residues R104 and D141.

This sequence belongs to the transferase hexapeptide repeat family. As to quaternary structure, homotrimer.

The protein resides in the cytoplasm. The catalysed reaction is (S)-2,3,4,5-tetrahydrodipicolinate + succinyl-CoA + H2O = (S)-2-succinylamino-6-oxoheptanedioate + CoA. The protein operates within amino-acid biosynthesis; L-lysine biosynthesis via DAP pathway; LL-2,6-diaminopimelate from (S)-tetrahydrodipicolinate (succinylase route): step 1/3. The polypeptide is 2,3,4,5-tetrahydropyridine-2,6-dicarboxylate N-succinyltransferase (Shewanella halifaxensis (strain HAW-EB4)).